The chain runs to 183 residues: MELVVGRVAKSHGIKGEIVVEVRTDEPEDRFAVGAVLRGHKPREQTVNTYRVEAAREHSGRLLLRLEGVPDRTAADALRGTLFVIDSAELVPSDDPDEFYDHELEGLSVRLADGTELGAVIEVLHSAAGELLSIRRAGEQSGELLVPFVAAIVTSVSVADGVVVIDPPEGLLDPDFGESADGK.

The PRC barrel domain occupies 95-171; that stretch reads DPDEFYDHEL…VVVIDPPEGL (77 aa).

Belongs to the RimM family. Binds ribosomal protein uS19.

Its subcellular location is the cytoplasm. Functionally, an accessory protein needed during the final step in the assembly of 30S ribosomal subunit, possibly for assembly of the head region. Essential for efficient processing of 16S rRNA. May be needed both before and after RbfA during the maturation of 16S rRNA. It has affinity for free ribosomal 30S subunits but not for 70S ribosomes. This Rhodococcus opacus (strain B4) protein is Ribosome maturation factor RimM.